Consider the following 314-residue polypeptide: Methionyl-tRNA formyltransferase (314 aa).

Position 113–116 (113–116) interacts with (6S)-5,6,7,8-tetrahydrofolate; that stretch reads SLLP.

The protein belongs to the Fmt family.

It catalyses the reaction L-methionyl-tRNA(fMet) + (6R)-10-formyltetrahydrofolate = N-formyl-L-methionyl-tRNA(fMet) + (6S)-5,6,7,8-tetrahydrofolate + H(+). Its function is as follows. Attaches a formyl group to the free amino group of methionyl-tRNA(fMet). The formyl group appears to play a dual role in the initiator identity of N-formylmethionyl-tRNA by promoting its recognition by IF2 and preventing the misappropriation of this tRNA by the elongation apparatus. In Ectopseudomonas mendocina (strain ymp) (Pseudomonas mendocina), this protein is Methionyl-tRNA formyltransferase.